Reading from the N-terminus, the 102-residue chain is Small ribosomal subunit protein uS14m (102 aa).

It belongs to the universal ribosomal protein uS14 family.

Its subcellular location is the mitochondrion. This chain is Small ribosomal subunit protein uS14m (RPS14), found in Paramecium tetraurelia.